Reading from the N-terminus, the 128-residue chain is Small ribosomal subunit protein uS10 (128 aa).

Belongs to the universal ribosomal protein uS10 family.

This Oryza sativa subsp. japonica (Rice) protein is Small ribosomal subunit protein uS10 (RPS20).